Consider the following 393-residue polypeptide: Putative competence-damage inducible protein (393 aa).

It belongs to the CinA family.

The polypeptide is Putative competence-damage inducible protein (Streptococcus suis (strain 98HAH33)).